We begin with the raw amino-acid sequence, 234 residues long: tRNA1(Val) (adenine(37)-N6)-methyltransferase (234 aa).

This sequence belongs to the methyltransferase superfamily. tRNA (adenine-N(6)-)-methyltransferase family.

Its subcellular location is the cytoplasm. The catalysed reaction is adenosine(37) in tRNA1(Val) + S-adenosyl-L-methionine = N(6)-methyladenosine(37) in tRNA1(Val) + S-adenosyl-L-homocysteine + H(+). Its function is as follows. Specifically methylates the adenine in position 37 of tRNA(1)(Val) (anticodon cmo5UAC). The sequence is that of tRNA1(Val) (adenine(37)-N6)-methyltransferase from Aliivibrio fischeri (strain ATCC 700601 / ES114) (Vibrio fischeri).